Consider the following 591-residue polypeptide: Acyl-CoA-dependent acyltransferase MAC1 (591 aa).

A peroxisomal targeting signal type 1 region spans residues 589-591 (ARL).

The protein belongs to the trichothecene O-acetyltransferase family.

The protein resides in the peroxisome. The protein operates within secondary metabolite biosynthesis. In terms of biological role, acyl-CoA-dependent acyltransferase; part of the gene cluster that mediates the biosynthesis of mannosylerythritol lipids (MELs), surface-active substances that enhance the availability of water-insoluble substrates. Mannosylerythritol lipid production is responsible for hemolytic activity of Ustilago maydis. Depending on the number of acetyl groups, mannosylerythritol lipids can be differentiated into MEL A (fully acetylated), MEL B and MEL C (monoacetylated at R-6 and R-4, respectively), and the fully deacetylated MEL D. The first step in the pathway is the generation of mannosylerythritol by the glycosyltransferase EMT1 which catalyzes the transfer of GDP-mannose to the C-4 atom of meso-erythritol. This reaction has to be stereospecific, since only mannosyl-D-erythritol is generated. The produced disaccharide is subsequently acylated with fatty acids of various lengths derived from the peroxisomal beta-oxidation by the peroxisomal acyltransferases MAC1 and MAC2 at positions C-2 and C-3, repectively. The existence of MEL derivatives which carry an acetyl group at C-2 implies that at least MAC1 also accepts acetyl-CoA as a donor. The final step of MEL biosynthesis is the acetylation of the fully acylated mannosylerythritol lipids catalyzed by the acetyl-CoA-dependent acetyltransferase MAT1. MAT1 displays a relaxed regioselectivity and is able to transfer acetylgroups to both positions C-4 and C-6 of the mannosyl moiety. The chain is Acyl-CoA-dependent acyltransferase MAC1 from Mycosarcoma maydis (Corn smut fungus).